The following is a 214-amino-acid chain: ATP phosphoribosyltransferase (214 aa).

Belongs to the ATP phosphoribosyltransferase family. Short subfamily. As to quaternary structure, heteromultimer composed of HisG and HisZ subunits.

Its subcellular location is the cytoplasm. The catalysed reaction is 1-(5-phospho-beta-D-ribosyl)-ATP + diphosphate = 5-phospho-alpha-D-ribose 1-diphosphate + ATP. It functions in the pathway amino-acid biosynthesis; L-histidine biosynthesis; L-histidine from 5-phospho-alpha-D-ribose 1-diphosphate: step 1/9. Catalyzes the condensation of ATP and 5-phosphoribose 1-diphosphate to form N'-(5'-phosphoribosyl)-ATP (PR-ATP). Has a crucial role in the pathway because the rate of histidine biosynthesis seems to be controlled primarily by regulation of HisG enzymatic activity. This Marinobacter nauticus (strain ATCC 700491 / DSM 11845 / VT8) (Marinobacter aquaeolei) protein is ATP phosphoribosyltransferase.